The primary structure comprises 221 residues: Immediate early response gene 2 protein (221 aa).

At Met-1 the chain carries N-acetylmethionine. The tract at residues 105 to 155 (ETPALCDPPPARVSRKRRSSSDLSDGSDAGLVPSKKARLEEVEGEATSEVP) is disordered. Positions 125–136 (SDLSDGSDAGLV) are enriched in low complexity.

It belongs to the IER family.

Its subcellular location is the cytoplasm. The protein localises to the nucleus. Functionally, DNA-binding protein that seems to act as a transcription factor. Involved in the regulation of neuronal differentiation, acts upon JNK-signaling pathway activation and plays a role in neurite outgrowth in hippocampal cells. May mediate with FIBP FGF-signaling in the establishment of laterality in the embryo. Promotes cell motility, seems to stimulate tumor metastasis. This is Immediate early response gene 2 protein (Ier2) from Mus musculus (Mouse).